The chain runs to 85 residues: U4-theraphotoxin-Hhn1a (85 aa).

Residues 1–22 form the signal peptide; sequence MKVTLIAILTCATVLVLHTTAA. Positions 23–48 are excised as a propeptide; that stretch reads EELEAESQLMEVGMPDTELAAVDEER. 3 cysteine pairs are disulfide-bonded: Cys52–Cys66, Cys56–Cys77, and Cys71–Cys82.

This sequence belongs to the neurotoxin 12 (Hwtx-2) family. 02 (Hwtx-2) subfamily. Monomer. As to expression, expressed by the venom gland.

The protein localises to the secreted. Functionally, neurotoxin active on both insects and mammals. This is U4-theraphotoxin-Hhn1a from Cyriopagopus hainanus (Chinese bird spider).